The following is a 383-amino-acid chain: Acetylornithine deacetylase (383 aa).

H80 is a binding site for Zn(2+). Residue D82 is part of the active site. D112 serves as a coordination point for Zn(2+). E144 is an active-site residue. 3 residues coordinate Zn(2+): E145, E169, and H355.

It belongs to the peptidase M20A family. ArgE subfamily. In terms of assembly, homodimer. The cofactor is Zn(2+). It depends on Co(2+) as a cofactor. Requires glutathione as cofactor.

Its subcellular location is the cytoplasm. It catalyses the reaction N(2)-acetyl-L-ornithine + H2O = L-ornithine + acetate. Its pathway is amino-acid biosynthesis; L-arginine biosynthesis; L-ornithine from N(2)-acetyl-L-ornithine (linear): step 1/1. In terms of biological role, catalyzes the hydrolysis of the amide bond of N(2)-acetylated L-amino acids. Cleaves the acetyl group from N-acetyl-L-ornithine to form L-ornithine, an intermediate in L-arginine biosynthesis pathway, and a branchpoint in the synthesis of polyamines. The chain is Acetylornithine deacetylase from Shigella boydii serotype 4 (strain Sb227).